Reading from the N-terminus, the 501-residue chain is UPF0288 protein Maeo_0995 (501 aa).

It belongs to the UPF0288 family.

This chain is UPF0288 protein Maeo_0995, found in Methanococcus aeolicus (strain ATCC BAA-1280 / DSM 17508 / OCM 812 / Nankai-3).